Here is a 398-residue protein sequence, read N- to C-terminus: Succinate--CoA ligase [ADP-forming] subunit beta (398 aa).

Positions 9 to 237 constitute an ATP-grasp domain; sequence RDLFETHGVP…AGGLDILELK (229 aa). Residues Lys45, 52–54, Ala94, and Glu99 contribute to the ATP site; that span reads GRG. Positions 191 and 205 each coordinate Mg(2+). Residues Asn257 and 319–321 contribute to the substrate site; that span reads GIT.

It belongs to the succinate/malate CoA ligase beta subunit family. In terms of assembly, heterotetramer of two alpha and two beta subunits. Mg(2+) serves as cofactor.

It carries out the reaction succinate + ATP + CoA = succinyl-CoA + ADP + phosphate. The enzyme catalyses GTP + succinate + CoA = succinyl-CoA + GDP + phosphate. The protein operates within carbohydrate metabolism; tricarboxylic acid cycle; succinate from succinyl-CoA (ligase route): step 1/1. In terms of biological role, succinyl-CoA synthetase functions in the citric acid cycle (TCA), coupling the hydrolysis of succinyl-CoA to the synthesis of either ATP or GTP and thus represents the only step of substrate-level phosphorylation in the TCA. The beta subunit provides nucleotide specificity of the enzyme and binds the substrate succinate, while the binding sites for coenzyme A and phosphate are found in the alpha subunit. The polypeptide is Succinate--CoA ligase [ADP-forming] subunit beta (Corynebacterium glutamicum (strain ATCC 13032 / DSM 20300 / JCM 1318 / BCRC 11384 / CCUG 27702 / LMG 3730 / NBRC 12168 / NCIMB 10025 / NRRL B-2784 / 534)).